A 115-amino-acid chain; its full sequence is Large ribosomal subunit protein bL19 (115 aa).

The protein belongs to the bacterial ribosomal protein bL19 family.

Functionally, this protein is located at the 30S-50S ribosomal subunit interface and may play a role in the structure and function of the aminoacyl-tRNA binding site. The protein is Large ribosomal subunit protein bL19 of Coxiella burnetii (strain CbuK_Q154) (Coxiella burnetii (strain Q154)).